A 173-amino-acid polypeptide reads, in one-letter code: Large ribosomal subunit protein uL22c (173 aa).

It belongs to the universal ribosomal protein uL22 family. In terms of assembly, part of the 50S ribosomal subunit.

It is found in the plastid. The protein localises to the chloroplast. Its function is as follows. This protein binds specifically to 23S rRNA. Functionally, the globular domain of the protein is located near the polypeptide exit tunnel on the outside of the subunit, while an extended beta-hairpin is found that lines the wall of the exit tunnel in the center of the 70S ribosome. This chain is Large ribosomal subunit protein uL22c (rpl22), found in Drimys granadensis.